The sequence spans 583 residues: CTP synthase (583 aa).

Positions 1 to 278 are amidoligase domain; the sequence is MRRHPQTATK…DAFVVRRLNL (278 aa). S20 is a binding site for CTP. S20 is a UTP binding site. Residues 21 to 26 and D78 each bind ATP; that span reads SLGKGL. Mg(2+)-binding residues include D78 and E152. Residues 159–161, 199–204, and K235 each bind CTP; these read DIE and KTKPTQ. UTP-binding positions include 199-204 and K235; that span reads KTKPTQ. In terms of domain architecture, Glutamine amidotransferase type-1 spans 303-551; the sequence is RIALVGKYVE…VKAAIDYKEG (249 aa). G366 lines the L-glutamine pocket. C393 acts as the Nucleophile; for glutamine hydrolysis in catalysis. L-glutamine-binding positions include 394–397, E416, and R477; that span reads LGLQ. Active-site residues include H524 and E526. Residues 559–583 are disordered; it reads PERVSNGAERRDQVGQSIPEPANRG.

It belongs to the CTP synthase family. In terms of assembly, homotetramer.

The catalysed reaction is UTP + L-glutamine + ATP + H2O = CTP + L-glutamate + ADP + phosphate + 2 H(+). It catalyses the reaction L-glutamine + H2O = L-glutamate + NH4(+). The enzyme catalyses UTP + NH4(+) + ATP = CTP + ADP + phosphate + 2 H(+). It functions in the pathway pyrimidine metabolism; CTP biosynthesis via de novo pathway; CTP from UDP: step 2/2. Its activity is regulated as follows. Allosterically activated by GTP, when glutamine is the substrate; GTP has no effect on the reaction when ammonia is the substrate. The allosteric effector GTP functions by stabilizing the protein conformation that binds the tetrahedral intermediate(s) formed during glutamine hydrolysis. Inhibited by the product CTP, via allosteric rather than competitive inhibition. Functionally, catalyzes the ATP-dependent amination of UTP to CTP with either L-glutamine or ammonia as the source of nitrogen. Regulates intracellular CTP levels through interactions with the four ribonucleotide triphosphates. The chain is CTP synthase from Mycobacterium ulcerans (strain Agy99).